The sequence spans 405 residues: N-methyltransferase nanE (405 aa).

S-adenosyl-L-methionine-binding positions include 238-239 (GG), D261, and 290-291 (HH).

It belongs to the class I-like SAM-binding methyltransferase superfamily. Cation-independent O-methyltransferase family.

It functions in the pathway secondary metabolite biosynthesis. In terms of biological role, N-methyltransferase; part of the gene cluster that mediates the biosynthesis of the benzazepine alkaloid nanangelenin A which contains an unprecedented 3,4-dihydro-1-benzazepine-2,5-dione-N-prenyl-N-acetoxy-anthranilamide scaffold. The first step of nanangelenin biosynthesis is catalyzed by the indoleamine 2,3-dioxygenase nanC which produces N-formyl-kynurenine through the catabolism of tryptophan. The two-module NRPS nanA then utilizes anthranilate (Ant) and L-kynurenine (L-Kyn) to assemble the dipeptide product nanangelenin B. The first adenylation domain of nanA (A1) loads anthranilate onto the T1 domain, while A2 loads kynurenine, generated through spontaneous nonenzymatic deformylation of the nanC-supplied N-formyl-kynurenine. The peptide bond formation between the tethered amino acids is catalyzed by the first condensation domain (C1) between anthranilate's carbonyl carbon and kynurenine's aliphatic primary amine. The second C domain (C2) catalyzes the final cyclization event between the aromatic amine of kynurenine and the tethered carbonyl carbon, yielding nanangelenin B. The terminal T3 domain enhances the catalytic efficiency of C2, suggesting the T2-tethered Ant-L-Kyn is transferred to T3 prior to cyclization by C2. Once released from nanA, nanangelenin B is then prenylated by the prenyltransferase nanD to form nanangelenin C. Nanangelenin C is then N-hydroxylated by the FAD-dependent monooxygenase nanF and further acetylated by the acetyltransferase nanB to yield nanangelenin F. Finally, the N-methyltransferase nanE methylates the amide nitrogen of 1-benzazepine to convert nanangelenin F into nanangelenin A. NanE is also able to methylate most of the intermediates of the pathway such as nanangelenin B and nanangelenin C to produce nanangelenin D and nanangelenin E, respectively. The protein is N-methyltransferase nanE of Aspergillus nanangensis.